A 291-amino-acid chain; its full sequence is Protease HtpX homolog (291 aa).

A run of 2 helical transmembrane segments spans residues 4–24 and 38–58; these read IALF…TASL and LGAL…ISLL. Zn(2+) is bound at residue histidine 144. Glutamate 145 is an active-site residue. Histidine 148 is a binding site for Zn(2+). 2 helical membrane passes run 159–179 and 197–217; these read LIQG…GYFI and VTTV…VAWF. Position 222 (glutamate 222) interacts with Zn(2+).

This sequence belongs to the peptidase M48B family. Zn(2+) serves as cofactor.

Its subcellular location is the cell inner membrane. The chain is Protease HtpX homolog from Leptothrix cholodnii (strain ATCC 51168 / LMG 8142 / SP-6) (Leptothrix discophora (strain SP-6)).